We begin with the raw amino-acid sequence, 106 residues long: Ribonuclease P protein component 4 (106 aa).

Zn(2+) contacts are provided by cysteine 63, cysteine 66, cysteine 89, and cysteine 92.

This sequence belongs to the eukaryotic/archaeal RNase P protein component 4 family. In terms of assembly, consists of a catalytic RNA component and at least 4-5 protein subunits. The cofactor is Zn(2+).

It is found in the cytoplasm. The catalysed reaction is Endonucleolytic cleavage of RNA, removing 5'-extranucleotides from tRNA precursor.. Its function is as follows. Part of ribonuclease P, a protein complex that generates mature tRNA molecules by cleaving their 5'-ends. In Methanosphaerula palustris (strain ATCC BAA-1556 / DSM 19958 / E1-9c), this protein is Ribonuclease P protein component 4.